Here is a 353-residue protein sequence, read N- to C-terminus: MSEPLKPRIDFAEPLKEEPTSAFKAQQTFSEAESRTFAPAAIDERPEDEGVAEAAVDAALRPKRSLWRKMVMGGLALFGASVVGQGVQWTMNAWQTQDWVALGGCAAGALIIGAGVGSVVTEWRRLWRLRQRAHERDEARELLHSHSVGKGRAFCEKLAQQAGIDQSHPALQRWYAAIHETQNDREIVGLYAHLVQPVLDAQARREISRFAAESTLMIAVSPLALVDMAFIAWRNLRLINRITTLYGIELGYYSRLRLFRLVLLNIAFAGASELVREVGMDWMSQDLAARLSTRAAQGIGAGLLTARLGIKAMELCRPLPWIDNDKPRLGDFRRQLIGQLKETLQKSKSSPEK.

Positions 1 to 19 are enriched in basic and acidic residues; sequence MSEPLKPRIDFAEPLKEEP. The interval 1–35 is disordered; it reads MSEPLKPRIDFAEPLKEEPTSAFKAQQTFSEAESR. Transmembrane regions (helical) follow at residues 70-90, 100-120, and 213-233; these read MVMG…VQWT, VALG…GSVV, and ESTL…FIAW.

Belongs to the UPF0283 family.

It is found in the cell inner membrane. The protein is UPF0283 membrane protein YcjF of Salmonella dublin (strain CT_02021853).